Consider the following 352-residue polypeptide: Histidine biosynthesis bifunctional protein HisB (352 aa).

Residues 1–164 (MSQKILFIDR…EIENEILSSF (164 aa)) form a histidinol-phosphatase region. Asp-9 acts as the Nucleophile in catalysis. Residues Asp-9 and Asp-11 each coordinate Mg(2+). Asp-11 functions as the Proton donor in the catalytic mechanism. Zn(2+)-binding residues include Cys-93, His-95, Cys-101, and Cys-103. Asp-130 provides a ligand contact to Mg(2+). The tract at residues 165-352 (RSASYQRTTK…ENLASSKGVI (188 aa)) is imidazoleglycerol-phosphate dehydratase.

This sequence in the N-terminal section; belongs to the histidinol-phosphatase family. The protein in the C-terminal section; belongs to the imidazoleglycerol-phosphate dehydratase family. Requires Mg(2+) as cofactor. Zn(2+) is required as a cofactor.

It is found in the cytoplasm. The catalysed reaction is D-erythro-1-(imidazol-4-yl)glycerol 3-phosphate = 3-(imidazol-4-yl)-2-oxopropyl phosphate + H2O. It carries out the reaction L-histidinol phosphate + H2O = L-histidinol + phosphate. It functions in the pathway amino-acid biosynthesis; L-histidine biosynthesis; L-histidine from 5-phospho-alpha-D-ribose 1-diphosphate: step 6/9. It participates in amino-acid biosynthesis; L-histidine biosynthesis; L-histidine from 5-phospho-alpha-D-ribose 1-diphosphate: step 8/9. This Campylobacter jejuni subsp. jejuni serotype O:2 (strain ATCC 700819 / NCTC 11168) protein is Histidine biosynthesis bifunctional protein HisB.